A 466-amino-acid chain; its full sequence is Vimentin (466 aa).

2 stretches are compositionally biased toward low complexity: residues 1 to 13 (MSTRSVSSSSYRR) and 20 to 33 (TSSRPSSNRSYVTT). Residues 1–33 (MSTRSVSSSSYRRMFGGSGTSSRPSSNRSYVTT) are disordered. Residue Ser-2 is modified to N-acetylserine. The tract at residues 2-95 (STRSVSSSSY…FSLADAINTE (94 aa)) is head. The residue at position 5 (Ser-5) is a Phosphoserine. Ser-7 is subject to Phosphoserine; by PKA and PKC; alternate. O-linked (GlcNAc) serine; alternate glycosylation is present at Ser-7. Ser-8 is subject to Phosphoserine. Ser-9 and Ser-10 each carry phosphoserine; by PKC. The residue at position 20 (Thr-20) is a Phosphothreonine. Position 21 is a phosphoserine; by PKC (Ser-21). Phosphoserine; by PKA and PKC is present on Ser-25. Ser-26 carries the phosphoserine; by PKC modification. O-linked (GlcNAc) threonine glycosylation occurs at Thr-33. The O-linked (GlcNAc) serine; alternate glycan is linked to Ser-34. Ser-34 is subject to Phosphoserine; by PKC; alternate. The residue at position 39 (Ser-39) is a Phosphoserine; by CaMK2, PKA, PKC and ROCK2. Ser-42 carries the post-translational modification Phosphoserine; by PKC. Ser-47 carries the post-translational modification Phosphoserine; by PKA. Ser-49 is modified (phosphoserine). Ser-51 is modified (phosphoserine; by PKA and PKC). Phosphotyrosine is present on Tyr-53. A phosphoserine mark is found at Ser-55 and Ser-56. The residue at position 61 (Tyr-61) is a Phosphotyrosine. Ser-66 carries the post-translational modification Phosphoserine; by PKA and PKC. Ser-72 carries the post-translational modification Phosphoserine; by AURKB and ROCK2. Ser-73 carries the post-translational modification Phosphoserine. The residue at position 83 (Ser-83) is a Phosphoserine; by CaMK2. Ser-87 carries the post-translational modification Phosphoserine. The interval 96–131 (FKNTRTNEKVELQELNDRFANYIDKVRFLEQQNKIL) is coil 1A. Positions 96-131 (FKNTRTNEKVELQELNDRFANYIDKVRFLEQQNKIL) form a coiled coil. The 309-residue stretch at 103 to 411 (EKVELQELND…KLLEGEESRI (309 aa)) folds into the IF rod domain. Residue Lys-104 forms a Glycyl lysine isopeptide (Lys-Gly) (interchain with G-Cter in SUMO2) linkage. Residue Tyr-117 is modified to Phosphotyrosine. N6-acetyllysine; alternate occurs at positions 120, 129, and 139. N6-succinyllysine; alternate occurs at positions 120 and 129. Glycyl lysine isopeptide (Lys-Gly) (interchain with G-Cter in SUMO2); alternate cross-links involve residues Lys-120, Lys-129, and Lys-139. Positions 132-153 (LAELEQLKGQGKSRLGDLYEEE) are linker 1. Residue Ser-144 is modified to Phosphoserine. A coiled-coil region spans residues 154-245 (MRELRRQVDQ…KLHDEEIQEL (92 aa)). Residues 154-245 (MRELRRQVDQ…KLHDEEIQEL (92 aa)) are coil 1B. Lys-168 bears the N6-acetyllysine mark. Lys-188 carries the post-translational modification N6-acetyllysine; alternate. The residue at position 188 (Lys-188) is an N6-succinyllysine; alternate. Phosphoserine is present on Ser-214. Lys-223 bears the N6-acetyllysine; alternate mark. Residue Lys-223 forms a Glycyl lysine isopeptide (Lys-Gly) (interchain with G-Cter in SUMO2); alternate linkage. Ser-226 bears the Phosphoserine mark. Lys-235 carries the post-translational modification N6-acetyllysine. The tract at residues 246–268 (QAQIQEQHVQIDVDVSKPDLTAA) is linker 12. Residue Lys-262 forms a Glycyl lysine isopeptide (Lys-Gly) (interchain with G-Cter in SUMO2) linkage. The tract at residues 269–407 (LRDVRQQYES…ATYRKLLEGE (139 aa)) is coil 2. Lys-294 carries the N6-acetyllysine; alternate modification. The residue at position 294 (Lys-294) is an N6-succinyllysine; alternate. Lys-294 participates in a covalent cross-link: Glycyl lysine isopeptide (Lys-Gly) (interchain with G-Cter in SUMO2); alternate. Ser-299 carries the phosphoserine modification. The stretch at 303–407 (NRNNDALRQA…ATYRKLLEGE (105 aa)) forms a coiled coil. Lys-313 is covalently cross-linked (Glycyl lysine isopeptide (Lys-Gly) (interchain with G-Cter in SUMO2)). A Phosphoserine modification is found at Ser-325. A [IL]-x-C-x-x-[DE] motif motif is present at residues 326–329 (LTCE). Lys-373 carries the post-translational modification N6-acetyllysine; alternate. Residue Lys-373 forms a Glycyl lysine isopeptide (Lys-Gly) (interchain with G-Cter in SUMO2); alternate linkage. The segment at 408 to 466 (ESRISLPLPTFSSLNLRETNLESLPLVDTHSKRTLLIKTVETRDGQVINETSQHHDDLE) is tail. 4 positions are modified to phosphoserine: Ser-409, Ser-412, Ser-419, and Ser-420. Residue Thr-426 is modified to Phosphothreonine. Ser-430 bears the Phosphoserine mark. A Phosphothreonine modification is found at Thr-436. Ser-438 bears the Phosphoserine mark. Lys-439 is covalently cross-linked (Glycyl lysine isopeptide (Lys-Gly) (interchain with G-Cter in SUMO2)). Lys-445 carries the post-translational modification N6-acetyllysine; alternate. Lys-445 bears the N6-succinyllysine; alternate mark. Lys-445 is covalently cross-linked (Glycyl lysine isopeptide (Lys-Gly) (interchain with G-Cter in SUMO2); alternate). A Glycyl lysine isopeptide (Lys-Gly) (interchain with G-Cter in SUMO1); alternate cross-link involves residue Lys-445. Phosphothreonine is present on residues Thr-446 and Thr-458. The residue at position 459 (Ser-459) is a Phosphoserine.

It belongs to the intermediate filament family. Homomer assembled from elementary dimers. Identified in complexes that contain VIM, EZR, AHNAK, BFSP1, BFSP2, ANK2, PLEC, PRX and spectrin. Interacts with BCAS3. Interacts with LGSN. Interacts with SYNM. Interacts (via rod region) with PLEC (via CH 1 domain). Interacts with PLEC isoform 1C. Interacts with STK33. Interacts with LARP6. Interacts with RAB8B. Interacts with TOR1A; the interaction associates TOR1A with the cytoskeleton. Interacts with TOR1AIP1. Interacts with DIAPH1. Interacts with EPPK1; interaction is dependent of higher-order structure of intermediate filament. Interacts with the non-receptor tyrosine kinase SRMS; the interaction leads to phosphorylation of VIM. Interacts with NOD2. Interacts (via head region) with CORO1C. Interacts with HDGF. Interacts with PRKCE (via phorbol-ester/DAG-type 2 domain). Interacts with BFSP2. Interacts with PPL. Interacts with PKP1 and PKP2. Interacts with SCRIB (via PDZ domains); the interaction protects SCRIB from proteasomal degradation and facilitates SCRIB localization to intermediate filaments, the interaction is reduced by cell contact inhibition. Post-translationally, phosphorylation by PKN1 inhibits the formation of filaments. Filament disassembly during mitosis is promoted by phosphorylation at Ser-55 as well as by nestin. One of the most prominent phosphoproteins in various cells of mesenchymal origin. Phosphorylation is enhanced during cell division, at which time vimentin filaments are significantly reorganized. Phosphorylated at Ser-56 by CDK5 during neutrophil secretion in the cytoplasm. Phosphorylated by STK33. Phosphorylated on tyrosine residues by SRMS. In terms of processing, S-nitrosylation is induced by interferon-gamma and oxidatively-modified low-densitity lipoprotein (LDL(ox)) possibly implicating the iNOS-S100A8/9 transnitrosylase complex. As to expression, detected in eye lens fiber cells (at protein level). Expressed in retinal lens epithelial cells (at protein level). Expressed in Langerhans cells in the epidermis (at protein level).

Its subcellular location is the cytoplasm. It is found in the cytoskeleton. It localises to the nucleus matrix. The protein resides in the cell membrane. Its function is as follows. Vimentins are class-III intermediate filaments found in various non-epithelial cells, especially mesenchymal cells. Vimentin is attached to the nucleus, endoplasmic reticulum, and mitochondria, either laterally or terminally. Plays a role in cell directional movement, orientation, cell sheet organization and Golgi complex polarization at the cell migration front. Protects SCRIB from proteasomal degradation and facilitates its localization to intermediate filaments in a cell contact-mediated manner. Functionally, involved with LARP6 in the stabilization of type I collagen mRNAs for CO1A1 and CO1A2. This Mus musculus (Mouse) protein is Vimentin.